The primary structure comprises 176 residues: Peptide deformylase (176 aa).

Fe cation-binding residues include Cys100 and His142. Residue Glu143 is part of the active site. Residue His146 participates in Fe cation binding.

Belongs to the polypeptide deformylase family. It depends on Fe(2+) as a cofactor.

It catalyses the reaction N-terminal N-formyl-L-methionyl-[peptide] + H2O = N-terminal L-methionyl-[peptide] + formate. Its function is as follows. Removes the formyl group from the N-terminal Met of newly synthesized proteins. Requires at least a dipeptide for an efficient rate of reaction. N-terminal L-methionine is a prerequisite for activity but the enzyme has broad specificity at other positions. The chain is Peptide deformylase from Elusimicrobium minutum (strain Pei191).